We begin with the raw amino-acid sequence, 696 residues long: Elongation factor G (696 aa).

Residues 8-290 (ERYRNIGIMA…AVLDYLPSPL (283 aa)) enclose the tr-type G domain. GTP is bound by residues 17–24 (AHIDAGKT), 88–92 (DTPGH), and 142–145 (NKMD).

This sequence belongs to the TRAFAC class translation factor GTPase superfamily. Classic translation factor GTPase family. EF-G/EF-2 subfamily.

It is found in the cytoplasm. Its function is as follows. Catalyzes the GTP-dependent ribosomal translocation step during translation elongation. During this step, the ribosome changes from the pre-translocational (PRE) to the post-translocational (POST) state as the newly formed A-site-bound peptidyl-tRNA and P-site-bound deacylated tRNA move to the P and E sites, respectively. Catalyzes the coordinated movement of the two tRNA molecules, the mRNA and conformational changes in the ribosome. This Nitrosomonas eutropha (strain DSM 101675 / C91 / Nm57) protein is Elongation factor G.